Reading from the N-terminus, the 688-residue chain is UvrABC system protein B (688 aa).

The region spanning 31–188 (GRVNAGEPDV…RKFVSMQYQR (158 aa)) is the Helicase ATP-binding domain. ATP is bound at residue 44–51 (GATGTGKS). The Beta-hairpin signature appears at 97–120 (YYDYYQPEAYVPQTDTFIEKDSSV). The Helicase C-terminal domain maps to 434 to 587 (QIDDLLEQIR…QVAYNTEHGI (154 aa)). The interval 607–632 (GEDTKKMLEGRGGGKRSPTPNLRREG) is disordered. One can recognise a UVR domain in the interval 642–677 (ETIISDLNDQMLQAAGELKFELAARLRDELGDLKRE).

The protein belongs to the UvrB family. Forms a heterotetramer with UvrA during the search for lesions. Interacts with UvrC in an incision complex.

The protein localises to the cytoplasm. Its function is as follows. The UvrABC repair system catalyzes the recognition and processing of DNA lesions. A damage recognition complex composed of 2 UvrA and 2 UvrB subunits scans DNA for abnormalities. Upon binding of the UvrA(2)B(2) complex to a putative damaged site, the DNA wraps around one UvrB monomer. DNA wrap is dependent on ATP binding by UvrB and probably causes local melting of the DNA helix, facilitating insertion of UvrB beta-hairpin between the DNA strands. Then UvrB probes one DNA strand for the presence of a lesion. If a lesion is found the UvrA subunits dissociate and the UvrB-DNA preincision complex is formed. This complex is subsequently bound by UvrC and the second UvrB is released. If no lesion is found, the DNA wraps around the other UvrB subunit that will check the other stand for damage. This chain is UvrABC system protein B, found in Clavibacter sepedonicus (Clavibacter michiganensis subsp. sepedonicus).